The following is a 416-amino-acid chain: Adenylosuccinate synthetase (416 aa).

GTP contacts are provided by residues glycine 11–lysine 17 and glycine 39–threonine 41. The active-site Proton acceptor is the aspartate 12. Aspartate 12 and glycine 39 together coordinate Mg(2+). Residues aspartate 12–lysine 15, asparagine 37–histidine 40, threonine 125, arginine 139, glutamine 214, threonine 229, and arginine 290 contribute to the IMP site. Residue histidine 40 is the Proton donor of the active site. Threonine 286–arginine 292 contributes to the substrate binding site. Residues arginine 292, lysine 318–aspartate 320, and serine 405–glycine 407 contribute to the GTP site.

Belongs to the adenylosuccinate synthetase family. Homodimer. Mg(2+) is required as a cofactor.

Its subcellular location is the cytoplasm. The catalysed reaction is IMP + L-aspartate + GTP = N(6)-(1,2-dicarboxyethyl)-AMP + GDP + phosphate + 2 H(+). The protein operates within purine metabolism; AMP biosynthesis via de novo pathway; AMP from IMP: step 1/2. In terms of biological role, plays an important role in the de novo pathway of purine nucleotide biosynthesis. Catalyzes the first committed step in the biosynthesis of AMP from IMP. This Picrophilus torridus (strain ATCC 700027 / DSM 9790 / JCM 10055 / NBRC 100828 / KAW 2/3) protein is Adenylosuccinate synthetase.